Here is a 533-residue protein sequence, read N- to C-terminus: Probable nucleolar protein 5-2 (533 aa).

The Nop domain occupies 281–399 (IAPNLTALVG…LEARLRNLEG (119 aa)). Disordered regions lie at residues 401–433 (DLGR…ITPA) and 445–533 (GETS…KSKD). Residues 413-424 (PKIEVYNKDKKM) are compositionally biased toward basic and acidic residues. A compositionally biased stretch (basic residues) spans 521-533 (KKDKKEKKKKSKD).

The protein belongs to the NOP5/NOP56 family.

The protein resides in the nucleus. It is found in the nucleolus. Functionally, required for 60S ribosomal subunit biogenesis. The protein is Probable nucleolar protein 5-2 (NOP5-2) of Arabidopsis thaliana (Mouse-ear cress).